The following is a 424-amino-acid chain: Phosphoprotein associated with glycosphingolipid-enriched microdomains 1 (424 aa).

The Extracellular portion of the chain corresponds to 1–17; that stretch reads MGPAGSALSSGQMQMQM. Residues 18 to 38 form a helical; Signal-anchor for type III membrane protein membrane-spanning segment; sequence VLWGSLAAVAMFFLITFLILL. Residues cysteine 39 and cysteine 42 are each lipidated (S-palmitoyl cysteine). The Cytoplasmic portion of the chain corresponds to 39–424; sequence CSSCDRDKKP…LQQGRDVTRL (386 aa). Phosphoserine occurs at positions 52 and 63. At tyrosine 107 the chain carries Phosphotyrosine; by LYN. Serine 157 is modified (phosphoserine). Phosphotyrosine is present on residues tyrosine 165, tyrosine 183, and tyrosine 224. Residues 194 to 347 form a disordered region; that stretch reads DKSQGGKSKS…GPPQRSSSSC (154 aa). The segment covering 215–230 has biased composition (basic and acidic residues); the sequence is AEGKADFAEYASVDRN. Serine 226 bears the Phosphoserine mark. The span at 236–247 shows a compositional bias: polar residues; that stretch reads STNAESILGTSS. Phosphotyrosine; by FYN and LYN is present on tyrosine 314. The tract at residues 314 to 317 is interaction with CSK; that stretch reads YSSV. Over residues 331-347 the composition is skewed to polar residues; that stretch reads STCQCPQGPPQRSSSSC. Serine 346 is modified (phosphoserine). 3 positions are modified to phosphotyrosine: tyrosine 351, tyrosine 381, and tyrosine 409. The disordered stretch occupies residues 361–424; sequence PNSISMLPPA…LQQGRDVTRL (64 aa). The interval 422 to 424 is interaction with NHERF1; sequence TRL.

As to quaternary structure, interacts with NHERF1/EBP50. In resting T-cells, part of a PAG1-NHERF1-MSN complex which is disrupted upon TCR activation. When phosphorylated, interacts with CSK. Identified in a complex with LYN and STAT3. Interacts with LYN. In terms of processing, palmitoylated. Post-translationally, phosphorylated by FYN on Tyr-314 in resting T-cells; which promotes interaction with CSK. Dephosphorylated by PTPRC/CD45 upon TCR activation; which leads to CSK dissociation. May also be dephosphorylated by PTPN11. Hyperphosphorylated in mast cells upon FCER1 activation. Phosphorylated by LYN in response to EPO. Ubiquitously expressed, with highest levels in developing brain, lung, thymus, spleen and testis. Present in mast cells.

It is found in the cell membrane. Its function is as follows. Negatively regulates TCR (T-cell antigen receptor)-mediated signaling in T-cells and FCER1 (high affinity immunoglobulin epsilon receptor)-mediated signaling in mast cells. Promotes CSK activation and recruitment to lipid rafts, which results in LCK inhibition. Inhibits immunological synapse formation by preventing dynamic arrangement of lipid raft proteins. May be involved in cell adhesion signaling. This Rattus norvegicus (Rat) protein is Phosphoprotein associated with glycosphingolipid-enriched microdomains 1 (Pag1).